The sequence spans 395 residues: Phosphoglycerate kinase (395 aa).

Residues 21–23 (DLN), R36, 59–62 (HLGR), R114, and R147 each bind substrate. Residues K198, E320, and 346–349 (GGDT) contribute to the ATP site.

Belongs to the phosphoglycerate kinase family. As to quaternary structure, monomer.

The protein localises to the cytoplasm. It catalyses the reaction (2R)-3-phosphoglycerate + ATP = (2R)-3-phospho-glyceroyl phosphate + ADP. The protein operates within carbohydrate degradation; glycolysis; pyruvate from D-glyceraldehyde 3-phosphate: step 2/5. This chain is Phosphoglycerate kinase, found in Nitrosospira multiformis (strain ATCC 25196 / NCIMB 11849 / C 71).